The primary structure comprises 120 residues: Ribonuclease P protein component 4 (120 aa).

Residues Cys-68, Cys-71, Cys-97, and Cys-100 each coordinate Zn(2+).

Belongs to the eukaryotic/archaeal RNase P protein component 4 family. In terms of assembly, consists of a catalytic RNA component and at least 5 protein subunits. Forms a heterodimeric subcomplex with Rnp1. Reconstituted enzyme missing individual protein subunits is suboptimally active, showing each subunit contributes to optimization of activity. The cofactor is Zn(2+).

The protein localises to the cytoplasm. The enzyme catalyses Endonucleolytic cleavage of RNA, removing 5'-extranucleotides from tRNA precursor.. Part of ribonuclease P, a protein complex that generates mature tRNA molecules by cleaving their 5'-ends. Binds RNase P RNA. The polypeptide is Ribonuclease P protein component 4 (Pyrococcus horikoshii (strain ATCC 700860 / DSM 12428 / JCM 9974 / NBRC 100139 / OT-3)).